Here is a 697-residue protein sequence, read N- to C-terminus: Long-chain-fatty-acid--CoA ligase 6 (697 aa).

The helical; Signal-anchor for type III membrane protein transmembrane segment at 25–45 threads the bilayer; sequence LSATTLVSMGALAAILAYWFT. The Cytoplasmic portion of the chain corresponds to 46–697; it reads HRPKALQPPC…QIEELYSISM (652 aa).

It belongs to the ATP-dependent AMP-binding enzyme family. Mg(2+) serves as cofactor. Expressed predominantly in erythrocyte precursors, in particular in reticulocytes, fetal blood cells derived from fetal liver, hemopoietic stem cells from cord blood, bone marrow and brain.

The protein resides in the mitochondrion outer membrane. It is found in the peroxisome membrane. Its subcellular location is the microsome membrane. The protein localises to the endoplasmic reticulum membrane. The catalysed reaction is a long-chain fatty acid + ATP + CoA = a long-chain fatty acyl-CoA + AMP + diphosphate. It carries out the reaction (5Z,8Z,11Z,14Z)-eicosatetraenoate + ATP + CoA = (5Z,8Z,11Z,14Z)-eicosatetraenoyl-CoA + AMP + diphosphate. It catalyses the reaction hexadecanoate + ATP + CoA = hexadecanoyl-CoA + AMP + diphosphate. The enzyme catalyses (E)-hexadec-2-enoate + ATP + CoA = (2E)-hexadecenoyl-CoA + AMP + diphosphate. The catalysed reaction is 15-hydroxy-(5Z,8Z,11Z,13E)-eicosatetraenoate + ATP + CoA = 15-hydroxy-(5Z,8Z,11Z,13E)-eicosatetraenoyl-CoA + AMP + diphosphate. It carries out the reaction 12-hydroxy-(5Z,8Z,10E,14Z)-eicosatetraenoate + ATP + CoA = 12-hydroxy-(5Z,8Z,10E,14Z)-eicosatetraenoyl-CoA + AMP + diphosphate. It catalyses the reaction 5-hydroxy-(6E,8Z,11Z,14Z)-eicosatetraenoate + ATP + CoA = 5-hydroxy-(6E,8Z,11Z,14Z)-eicosatetraenoyl-CoA + AMP + diphosphate. Catalyzes the conversion of long-chain fatty acids to their active form acyl-CoA for both synthesis of cellular lipids, and degradation via beta-oxidation. Plays an important role in fatty acid metabolism in brain and the acyl-CoAs produced may be utilized exclusively for the synthesis of the brain lipid. This chain is Long-chain-fatty-acid--CoA ligase 6, found in Homo sapiens (Human).